A 268-amino-acid chain; its full sequence is Interleukin-1 alpha (268 aa).

Residues 1–112 constitute a propeptide that is removed on maturation; that stretch reads MAKVPDLFED…NTEEEIIKPR (112 aa). Position 82 is an N6-acetyllysine (K82). Residues 82 to 86 form a nuclear localization signal (NLS) region; that stretch reads KKRRL. S87 is subject to Phosphoserine. N-linked (GlcNAc...) asparagine glycosylation is found at N102 and N141.

This sequence belongs to the IL-1 family. In terms of assembly, monomer. Interacts with TMED10; the interaction mediates the translocation from the cytoplasm into the ERGIC (endoplasmic reticulum-Golgi intermediate compartment) and thereby secretion. Interacts with IL1R1. Interacts with S100A13; this interaction is the first step in the export of IL1A, followed by direct translocation of this complex across the plasma membrane. Post-translationally, acetylated within its nuclear localization sequence, which impacts subcellular localization. Proteolytic processed by CAPN1 in a calcium-dependent manner. Cleavage from 31 kDa precursor to 18 kDa biologically active molecules. In terms of processing, phosphorylated. Phosphorylation greatly enhances susceptibility to digestion and promotes the conversion of pre-IL1A alpha to the biologically active IL1A.

It localises to the nucleus. The protein resides in the cytoplasm. Its subcellular location is the secreted. Functionally, cytokine constitutively present intracellularly in nearly all resting non-hematopoietic cells that plays an important role in inflammation and bridges the innate and adaptive immune systems. After binding to its receptor IL1R1 together with its accessory protein IL1RAP, forms the high affinity interleukin-1 receptor complex. Signaling involves the recruitment of adapter molecules such as MYD88, IRAK1 or IRAK4. In turn, mediates the activation of NF-kappa-B and the three MAPK pathways p38, p42/p44 and JNK pathways. Within the cell, acts as an alarmin and cell death results in its liberation in the extracellular space after disruption of the cell membrane to induce inflammation and alert the host to injury or damage. In addition to its role as a danger signal, which occurs when the cytokine is passively released by cell necrosis, directly senses DNA damage and acts as signal for genotoxic stress without loss of cell integrity. The protein is Interleukin-1 alpha (IL1A) of Bubalus carabanensis (Swamp type water buffalo).